A 407-amino-acid polypeptide reads, in one-letter code: Peptidase T (407 aa).

Histidine 82 contacts Zn(2+). Aspartate 84 is an active-site residue. Aspartate 143 contributes to the Zn(2+) binding site. Glutamate 177 serves as the catalytic Proton acceptor. Residues glutamate 178, aspartate 200, and histidine 382 each contribute to the Zn(2+) site.

It belongs to the peptidase M20B family. Requires Zn(2+) as cofactor.

The protein localises to the cytoplasm. The enzyme catalyses Release of the N-terminal residue from a tripeptide.. In terms of biological role, cleaves the N-terminal amino acid of tripeptides. The sequence is that of Peptidase T from Streptococcus thermophilus (strain ATCC BAA-491 / LMD-9).